Reading from the N-terminus, the 606-residue chain is Protein spire homolog 2 (606 aa).

In terms of domain architecture, KIND spans 21-219 (LSLEEVLKSY…RALFLETLEL (199 aa)). A disordered region spans residues 147–181 (KHCGSNAAKDEGYSGQDEEEEEEEEEEEEGAGRGI). Residues 162–175 (QDEEEEEEEEEEEE) are compositionally biased toward acidic residues. WH2 domains are found at residues 263–277 (QLMK…LKKV) and 357–374 (LHDR…LRPV). 2 disordered regions span residues 438-464 (DEDS…RSFS) and 517-537 (CRSL…ASHG). Over residues 445–464 (VDMRRVESSPTPLKRDRSFS) the composition is skewed to basic and acidic residues. A spir-box region spans residues 554-574 (LALTVDGVINVRRILVKAEME).

It belongs to the spire family.

Its subcellular location is the cytoplasm. It is found in the cytoskeleton. It localises to the cytosol. The protein localises to the cell membrane. The protein resides in the cytoplasmic vesicle membrane. In terms of biological role, acts as an actin nucleation factor, remains associated with the slow-growing pointed end of the new filament. Involved in intracellular vesicle transport along actin fibers, providing a novel link between actin cytoskeleton dynamics and intracellular transport. Required for asymmetric spindle positioning and asymmetric cell division during oocyte meiosis. Required for normal formation of the cleavage furrow and for polar body extrusion during female germ cell meiosis. Also acts in the nucleus: together with SPIRE1 and SPIRE2, promotes assembly of nuclear actin filaments in response to DNA damage in order to facilitate movement of chromatin and repair factors after DNA damage. The protein is Protein spire homolog 2 (spire2) of Danio rerio (Zebrafish).